A 328-amino-acid chain; its full sequence is 2-oxoglutarate-dependent dioxygenase gloE (328 aa).

In terms of domain architecture, Fe2OG dioxygenase spans 170–271 (TRTNLTFLKY…RYTLAYFLRP (102 aa)). Positions 194, 196, and 249 each coordinate Fe cation. Arg-262 provides a ligand contact to 2-oxoglutarate.

It belongs to the iron/ascorbate-dependent oxidoreductase family. The cofactor is Fe(2+).

It functions in the pathway mycotoxin biosynthesis. In terms of biological role, 2-oxoglutarate-dependent dioxygenase; part of the gene cluster that mediates the biosynthesis of pneumocandins, lipohexapeptides of the echinocandin family that prevent fungal cell wall formation by non-competitive inhibition of beta-1,3-glucan synthase. The 10,12-dimethylmyristoyl side chain is synthesized by the reducing polyketide synthase gloL/GLPKS4. The thioesterase gloN/GLHYD exclusively interacts with gloL/GLPKS4 to maintain turnover of the polyketide side chain. The 10R,12S-dimethylmyristic acid is then transferred to the first thiolation domain of the nonribosomal peptide synthetase gloA/GLNRPS4 by the acyl-AMP ligase gloD/GLligase, followed by its acylation to L-ornithine to trigger elongation of the cyclic hexapeptide. L-ornithine, 4R-hydroxyl-L-proline (generated from L-proline by the dioxygenase gloF/GLOXY2), 3S-hydroxyl-L-homotyrosine (generated by gloG/GLHtyB, gloH/GLHtyA, gloI/GLHtyC, gloJ/GLHtyD and hydroxylated at C-3 by the dioxygenase gloM/GLOXY1), 3R-hydroxyl-L-glutamine (generated from L-glutamine probably by the dioxygenase gloE/GLOXY3) and 3S-hydroxyl-L-proline (generated from L-proline by the dioxygenase gloF/GLOXY2 to yield pneumocandin B0), or 3S-hydroxyl-4S-methyl-L-proline (generated from L-leucine by the dioxygenase gloC/GLOXY4 to yield pneumocandin A0) are sequentially added to the growing chain. The last C domain of gloA/GLNRPS4 is proposed to be responsible for cyclization by condensation to form the peptide bond between L-ornithine and 3S-hydroxyl-4S-methyl-L-proline (for pneumocandin A0) or 3S-hydroxyl-L-proline (for pneumocandin B0). Finally, the subsequent C-4 hydroxylation of 3S-hydroxyl-L-homotyrosine and L-ornithine dihydroxylation at C-4 and C-5 are performed by the cytochrome P450 monooxygenases gloP/GLP450-1 and gloO/GLP450-2, respectively. The polypeptide is 2-oxoglutarate-dependent dioxygenase gloE (Glarea lozoyensis (strain ATCC 20868 / MF5171)).